The primary structure comprises 273 residues: Serine acetyltransferase (273 aa).

This sequence belongs to the transferase hexapeptide repeat family. Part of the cysteine synthase complex formed at a ratio of 1 copy of this protein and 2 copies of O-acetylserine sulfhydrylase (cysK). The complex reversibly dissociates in the presence of O-acetyl-L-serine in the absence of hydrogen sulfide.

It is found in the cytoplasm. The enzyme catalyses L-serine + acetyl-CoA = O-acetyl-L-serine + CoA. It participates in amino-acid biosynthesis; L-cysteine biosynthesis; L-cysteine from L-serine: step 1/2. Its activity is regulated as follows. Sensitive to feedback inhibition by L-cysteine. This is Serine acetyltransferase (cysE) from Salmonella typhimurium (strain LT2 / SGSC1412 / ATCC 700720).